The chain runs to 158 residues: Transcription elongation factor GreA (158 aa).

A disordered region spans residues 41 to 61; that stretch reads GDLSENAEYHAAKEDQSHNEG. Residues 51–74 adopt a coiled-coil conformation; it reads AAKEDQSHNEGRIAELEDKLARAE.

Belongs to the GreA/GreB family.

In terms of biological role, necessary for efficient RNA polymerase transcription elongation past template-encoded arresting sites. The arresting sites in DNA have the property of trapping a certain fraction of elongating RNA polymerases that pass through, resulting in locked ternary complexes. Cleavage of the nascent transcript by cleavage factors such as GreA or GreB allows the resumption of elongation from the new 3'terminus. GreA releases sequences of 2 to 3 nucleotides. The protein is Transcription elongation factor GreA of Nitrobacter hamburgensis (strain DSM 10229 / NCIMB 13809 / X14).